The primary structure comprises 396 residues: NADH-quinone oxidoreductase subunit D (396 aa).

Belongs to the complex I 49 kDa subunit family. NDH-1 is composed of 14 different subunits. Subunits NuoB, C, D, E, F, and G constitute the peripheral sector of the complex.

It localises to the cell inner membrane. It carries out the reaction a quinone + NADH + 5 H(+)(in) = a quinol + NAD(+) + 4 H(+)(out). Its function is as follows. NDH-1 shuttles electrons from NADH, via FMN and iron-sulfur (Fe-S) centers, to quinones in the respiratory chain. The immediate electron acceptor for the enzyme in this species is believed to be ubiquinone. Couples the redox reaction to proton translocation (for every two electrons transferred, four hydrogen ions are translocated across the cytoplasmic membrane), and thus conserves the redox energy in a proton gradient. The chain is NADH-quinone oxidoreductase subunit D from Rhizobium johnstonii (strain DSM 114642 / LMG 32736 / 3841) (Rhizobium leguminosarum bv. viciae).